The primary structure comprises 455 residues: MAQMQREEVESVTTEKKRLDGGGGSSGAQATAFKFNAQAPEFVPRSHTTAPAPQVSPVSGYFYPCFHYNGGCIGGCGGGVCGGGGTGVGTQSSDWIYVGGGDPTAQHQHVHDPAAAFYISNPAVQFPASQNSSSSSKNLLSDDLRLKIVKQVEYQFTDMSLLANESISKHISKDPEGYVPVSYIASTKKIKALTSNHHLVSLALRSSSKLVVSEDGKKVKRTSQFTDRDREELQGRTVVAENLPDDHSYQNLEKIFGVVGNVKAIRICHPPESNSSRPKGDFLMSNKIHALIEYDNTVIADKAVEKLNDERNWRKGLRVRLLLRCSPKSVLKNRRNFDGILIDDELPSYESGEDSPRLHLTESQLDNDGDDNNVGGLWGKGRGKGRGRSPRSYAVGGGGRSFGIGLGVSLGIPSLGSHESSSPKTATKGPRMPDGTRGFTMGRGKPSISLSPNNL.

The span at 1-20 shows a compositional bias: basic and acidic residues; that stretch reads MAQMQREEVESVTTEKKRLD. A disordered region spans residues 1-29; that stretch reads MAQMQREEVESVTTEKKRLDGGGGSSGAQ. One can recognise an HTH La-type RNA-binding domain in the interval 138-229; sequence NLLSDDLRLK…KRTSQFTDRD (92 aa). The RRM domain maps to 236–324; that stretch reads RTVVAENLPD…KGLRVRLLLR (89 aa). Disordered stretches follow at residues 348 to 396 and 414 to 455; these read SYES…YAVG and SLGS…PNNL.

The protein localises to the nucleus. Its function is as follows. Transcriptional regulator. The polypeptide is La-related protein 6C (LARP6C) (Arabidopsis thaliana (Mouse-ear cress)).